The following is a 167-amino-acid chain: Thioredoxin M-type, chloroplastic (167 aa).

Residues 1 to 53 (MAMETCFRAWALHAPAGSKDRLLVGNLVLPSKRALAPLSVGRVATRRPRHVCQ) constitute a chloroplast transit peptide. One can recognise a Thioredoxin domain in the interval 54 to 165 (SKNAVDEVVV…LTTLIDKYIG (112 aa)). A disulfide bond links cysteine 89 and cysteine 92.

It belongs to the thioredoxin family. Plant M-type subfamily. Forms a complex with heterodimeric ferredoxin-thioredoxin reductase (FTR) and ferredoxin.

It is found in the plastid. Its subcellular location is the chloroplast. In terms of biological role, participates in various redox reactions through the reversible oxidation of the active center dithiol to a disulfide. The M form is known to activate NADP-malate dehydrogenase. This chain is Thioredoxin M-type, chloroplastic (TRM1), found in Zea mays (Maize).